Reading from the N-terminus, the 391-residue chain is tRNA-specific 2-thiouridylase MnmA (391 aa).

Residues 35 to 42 and Leu61 contribute to the ATP site; that span reads GLSGGVDS. Catalysis depends on Cys122, which acts as the Nucleophile. Cys122 and Cys221 are oxidised to a cystine. Residue Gly147 coordinates ATP. The interval 171–173 is interaction with tRNA; the sequence is KDQ. Catalysis depends on Cys221, which acts as the Cysteine persulfide intermediate. The segment at 328-329 is interaction with tRNA; it reads RY.

Belongs to the MnmA/TRMU family.

Its subcellular location is the cytoplasm. It carries out the reaction S-sulfanyl-L-cysteinyl-[protein] + uridine(34) in tRNA + AH2 + ATP = 2-thiouridine(34) in tRNA + L-cysteinyl-[protein] + A + AMP + diphosphate + H(+). Its function is as follows. Catalyzes the 2-thiolation of uridine at the wobble position (U34) of tRNA, leading to the formation of s(2)U34. In Synechococcus sp. (strain CC9311), this protein is tRNA-specific 2-thiouridylase MnmA.